Here is a 555-residue protein sequence, read N- to C-terminus: Formate--tetrahydrofolate ligase (555 aa).

An ATP-binding site is contributed by 65–72 (TPAGEGKT).

It belongs to the formate--tetrahydrofolate ligase family.

It catalyses the reaction (6S)-5,6,7,8-tetrahydrofolate + formate + ATP = (6R)-10-formyltetrahydrofolate + ADP + phosphate. It participates in one-carbon metabolism; tetrahydrofolate interconversion. In Thermoanaerobacter pseudethanolicus (strain ATCC 33223 / 39E) (Clostridium thermohydrosulfuricum), this protein is Formate--tetrahydrofolate ligase.